Reading from the N-terminus, the 121-residue chain is LOB domain-containing protein 23 (121 aa).

In terms of domain architecture, LOB spans 4–105; it reads KRCAACKYLR…NELAKTQAEI (102 aa).

It belongs to the LOB domain-containing protein family.

The protein is LOB domain-containing protein 23 (LBD23) of Arabidopsis thaliana (Mouse-ear cress).